A 107-amino-acid polypeptide reads, in one-letter code: Guanylate cyclase activator 2B (107 aa).

Residues 1-21 (MSGSQLWAAVVVLLLLQSAQG) form the signal peptide. Positions 22 to 92 (VYIKYHGFQV…STFKALRTIA (71 aa)) are excised as a propeptide. 3 cysteine pairs are disulfide-bonded: C63–C76, C96–C104, and C99–C107.

This sequence belongs to the guanylin family.

It is found in the secreted. Its function is as follows. Endogenous activator of intestinal guanylate cyclase. It stimulates this enzyme through the same receptor binding region as the heat-stable enterotoxins. May be a potent physiological regulator of intestinal fluid and electrolyte transport. May be an autocrine/paracrine regulator of intestinal salt and water transport. The chain is Guanylate cyclase activator 2B (GUCA2B) from Notomys alexis (Spinifex hopping mouse).